A 442-amino-acid chain; its full sequence is Dol-P-Man:Man(5)GlcNAc(2)-PP-Dol alpha-1,3-mannosyltransferase (442 aa).

Residues 1–34 (MAAPSSRPESNPPLYKQALDFALDVANGRHALSK) are Lumenal-facing. The helical transmembrane segment at 35-55 (LIPPALFLVDALLCGLIIWKV) threads the bilayer. Topologically, residues 56–84 (PYTEIDWAAYMEQVSQILSGERDYTKVRG) are cytoplasmic. The helical transmembrane segment at 85 to 105 (GTGPLVYPAAHVYIYTGLYHL) threads the bilayer. The Lumenal segment spans residues 106–111 (TDEGRN). A helical transmembrane segment spans residues 112-132 (ILLAQQLFAGLYMVTLAVVMG). At 133–155 (CYWQAKAPPYLFPLLTLSKRLHS) the chain is on the cytoplasmic side. A helical transmembrane segment spans residues 156–176 (IFVLRCFNDCFAVLFLWLAIF). The Lumenal segment spans residues 177-198 (FFQRRNWQAGALLYTLGLGVKM). A helical membrane pass occupies residues 199 to 219 (TLLLSLPAVGIVLFLGSGSFV). Residue Thr220 is a topological domain, cytoplasmic. Residues 221 to 241 (TLQLVATMGLVQILIGVPFLA) traverse the membrane as a helical segment. At 242-272 (HYPTEYLSRAFELSRQFFFKWTVNWRFVGEE) the chain is on the lumenal side. Residues 273-293 (IFLSKGFALTLLALHVLVLGI) form a helical membrane-spanning segment. At 294-333 (FITTRWIKPARKSLVQLISPVLLAGKPPLTVPEHRAAARD) the chain is on the cytoplasmic side. A helical membrane pass occupies residues 334-354 (VTPRYIMTTILSANAVGLLFA). Topologically, residues 355-376 (RSLHYQFYAYVAWSTPFLLWRA) are lumenal. Residues 377–397 (GLHPVLVYLLWAVHEWAWNVF) form a helical membrane-spanning segment. The Cytoplasmic segment spans residues 398–401 (PSTP). Residues 402–422 (ASSAVVVGVLGVTVAGVWFGA) traverse the membrane as a helical segment. At 423 to 442 (REEWEPGMKSSSKKEEAAMR) the chain is on the lumenal side.

It belongs to the glycosyltransferase ALG3 family.

The protein resides in the endoplasmic reticulum membrane. The enzyme catalyses an alpha-D-Man-(1-&gt;2)-alpha-D-Man-(1-&gt;2)-alpha-D-Man-(1-&gt;3)-[alpha-D-Man-(1-&gt;6)]-beta-D-Man-(1-&gt;4)-beta-D-GlcNAc-(1-&gt;4)-alpha-D-GlcNAc-diphospho-di-trans,poly-cis-dolichol + a di-trans,poly-cis-dolichyl beta-D-mannosyl phosphate = an alpha-D-Man-(1-&gt;2)-alpha-D-Man-(1-&gt;2)-alpha-D-Man-(1-&gt;3)-[alpha-D-Man-(1-&gt;3)-alpha-D-Man-(1-&gt;6)]-beta-D-Man-(1-&gt;4)-beta-D-GlcNAc-(1-&gt;4)-alpha-D-GlcNAc-diphospho-di-trans,poly-cis-dolichol + a di-trans,poly-cis-dolichyl phosphate + H(+). It participates in protein modification; protein glycosylation. Its function is as follows. Dol-P-Man:Man(5)GlcNAc(2)-PP-Dol alpha-1,3-mannosyltransferase that operates in the biosynthetic pathway of dolichol-linked oligosaccharides, the glycan precursors employed in protein asparagine (N)-glycosylation. The assembly of dolichol-linked oligosaccharides begins on the cytosolic side of the endoplasmic reticulum membrane and finishes in its lumen. The sequential addition of sugars to dolichol pyrophosphate produces dolichol-linked oligosaccharides containing fourteen sugars, including two GlcNAcs, nine mannoses and three glucoses. Once assembled, the oligosaccharide is transferred from the lipid to nascent proteins by oligosaccharyltransferases. In the lumen of the endoplasmic reticulum, adds the first dolichyl beta-D-mannosyl phosphate derived mannose in an alpha-1,3 linkage to Man(5)GlcNAc(2)-PP-dolichol to produce Man(6)GlcNAc(2)-PP-dolichol. The protein is Dol-P-Man:Man(5)GlcNAc(2)-PP-Dol alpha-1,3-mannosyltransferase (alg-3) of Neurospora crassa (strain ATCC 24698 / 74-OR23-1A / CBS 708.71 / DSM 1257 / FGSC 987).